Consider the following 414-residue polypeptide: Cytosolic-abundant heat soluble protein 89226 (414 aa).

Basic and acidic residues-rich tracts occupy residues 27-45 (IGED…DKRP) and 69-84 (AGQR…ERLR). A disordered region spans residues 27 to 155 (IGEDRGKEDP…SNPGMNNGMT (129 aa)). Low complexity-rich tracts occupy residues 86-101 (SRSS…VEPS) and 120-134 (SSNR…SSSD). A compositionally biased stretch (polar residues) spans 142 to 155 (ASRNSNPGMNNGMT). CAHS motif stretches follow at residues 305–323 (YRNA…LERQ) and 342–360 (QQQE…LEQE). The stretch at 341-376 (RQQQEIRLEAEYAMRALEQERVNARAALDQAMASTN) forms a coiled coil. Residues 388–405 (THSQGRVTTTSESRTSQA) show a composition bias toward polar residues. The disordered stretch occupies residues 388 to 414 (THSQGRVTTTSESRTSQARGPATAAVI).

It belongs to the Cytosolic-abundant heat soluble protein (CAHS) family.

It is found in the cytoplasm. Functionally, CAHS proteins are cytosolic heat soluble proteins that seem to contribute to the anhydrobiosis in tardigrades, but their specific mechanisms are yet to be identified. It is possible that protection during anhydrobiosis might occur via the stabilization of vitrifying small molecules such as sugars, but not via the direct glass transition of CAHS proteins themselves. The protein is Cytosolic-abundant heat soluble protein 89226 of Hypsibius exemplaris (Freshwater tardigrade).